The primary structure comprises 69 residues: Cold shock-like protein CspC (69 aa).

The 61-residue stretch at 6–66 folds into the CSD domain; it reads GQVKWFNESK…GQKGPAAVNV (61 aa).

The protein localises to the cytoplasm. In Escherichia coli O157:H7, this protein is Cold shock-like protein CspC (cspC).